A 163-amino-acid polypeptide reads, in one-letter code: ADP-ribosylation factor-like protein 2-binding protein (163 aa).

Belongs to the ARL2BP family. As to quaternary structure, interacts with GTP bound ARL2 and ARL3; the complex ARL2-ARL2BP as well as ARL2BP alone, binds to SLC25A4/ANT1. Interaction with ARL2 may be required for cilia basal body localization. Interacts with STAT3; interaction is enhanced with ARL2. Found in a complex with ARL2BP, ARL2 and SLC25A6. Found in a complex with ARL2, ARL2BP and SLC25A4. Interacts with STAT2, STAT3 and STAT4.

Its subcellular location is the cytoplasm. The protein localises to the mitochondrion intermembrane space. It is found in the cytoskeleton. The protein resides in the microtubule organizing center. It localises to the centrosome. Its subcellular location is the nucleus. The protein localises to the spindle. It is found in the cilium basal body. Functionally, together with ARL2, plays a role in the nuclear translocation, retention and transcriptional activity of STAT3. May play a role as an effector of ARL2. This Macaca fascicularis (Crab-eating macaque) protein is ADP-ribosylation factor-like protein 2-binding protein (ARL2BP).